Reading from the N-terminus, the 182-residue chain is Early nodulin-like protein 10 (182 aa).

The N-terminal stretch at 1 to 20 (MSSVMMCCCLLLLFGLLSEG) is a signal peptide. Positions 21-125 (REILVGGKSN…GEKLRVVVLS (105 aa)) constitute a Phytocyanin domain. Asparagine 65 is a glycosylation site (N-linked (GlcNAc...) asparagine). A disulfide bond links cysteine 79 and cysteine 113. Asparagine 129 and asparagine 148 each carry an N-linked (GlcNAc...) asparagine glycan. The GPI-anchor amidated asparagine moiety is linked to residue asparagine 157. The propeptide at 158 to 182 (AHIMNKGSLNTAWSLLLLLPLGLLV) is removed in mature form.

Belongs to the early nodulin-like (ENODL) family. In terms of tissue distribution, mostly expressed in flowers, and, to a lower extent, in leaves, but barely in seedlings, stems, seeds and roots.

Its subcellular location is the cell membrane. In terms of biological role, may act as a carbohydrate transporter. The protein is Early nodulin-like protein 10 of Arabidopsis thaliana (Mouse-ear cress).